The primary structure comprises 44 residues: Thioredoxin (44 aa).

The Thioredoxin domain occupies 2–44 (IELDKSNFEEEVLKAEGTVLVDFWSPSCEPCKALMPHVHDFEE). Cysteine 29 and cysteine 32 form a disulfide bridge.

The protein belongs to the thioredoxin family.

In terms of biological role, participates in various redox reactions through the reversible oxidation of its active center dithiol to a disulfide and catalyzes dithiol-disulfide exchange reactions. The polypeptide is Thioredoxin (trxA) (Tissierella creatinophila).